The primary structure comprises 381 residues: cAMP-dependent protein kinase type I-beta regulatory subunit (381 aa).

Positions 1 to 136 (MASPSCFHSE…ALAKAISKNV (136 aa)) are dimerization and phosphorylation. Phosphoserine is present on Ser-3. Tyr-21 is modified (3'-nitrotyrosine). The segment at 66-88 (LARQKSNSQCDSHDEEISPTPPN) is disordered. Phosphoserine is present on residues Ser-77 and Ser-83. Thr-85 bears the Phosphothreonine mark. The Pseudophosphorylation motif motif lies at 96 to 100 (RRGGV). Omega-N-methylarginine is present on Arg-97. 3',5'-cyclic AMP contacts are provided by residues 137–254 (LFSH…SKVS), Glu-202, Arg-211, 255–381 (ILES…SLTV), Glu-326, and Arg-335.

Belongs to the cAMP-dependent kinase regulatory chain family. In terms of assembly, the inactive holoenzyme is composed of two regulatory chains and two catalytic chains. Activation by cAMP releases the two active catalytic monomers and the regulatory dimer. Interacts with PRKX; regulates this cAMP-dependent protein kinase. Interacts with smAKAP; this interaction may target PRKAR1B to the plasma membrane. Post-translationally, the pseudophosphorylation site binds to the substrate-binding region of the catalytic chain, resulting in the inhibition of its activity. In terms of tissue distribution, four types of regulatory chains are found: I-alpha, I-beta, II-alpha, and II-beta. Their expression varies among tissues and is in some cases constitutive and in others inducible.

It is found in the cell membrane. Regulatory subunit of the cAMP-dependent protein kinases involved in cAMP signaling in cells. In Mus musculus (Mouse), this protein is cAMP-dependent protein kinase type I-beta regulatory subunit (Prkar1b).